The primary structure comprises 56 residues: Metallothionein (56 aa).

The Zn(2+) site is built by Cys9, Cys11, Cys14, Cys16, Cys32, Cys36, His40, Cys47, His49, Cys52, and Cys54.

This sequence belongs to the metallothionein superfamily. Type 14 family.

Its function is as follows. May play a role in essential metal ion homeostasis (especially zinc homeostasis) and resistance to certain non-essential metal ions. Binds four zinc ions. The sequence is that of Metallothionein (smtA) from Synechococcus elongatus (strain ATCC 33912 / PCC 7942 / FACHB-805) (Anacystis nidulans R2).